A 351-amino-acid chain; its full sequence is Dihydroorotate dehydrogenase (quinone) (351 aa).

Residues 67-71 and Thr91 contribute to the FMN site; that span reads AGFDK. Lys71 lines the substrate pocket. 116–120 lines the substrate pocket; the sequence is NAMGF. FMN contacts are provided by Asn145 and Asn178. Asn178 is a binding site for substrate. Catalysis depends on Ser181, which acts as the Nucleophile. A substrate-binding site is contributed by Asn183. Residues Lys214 and Thr242 each coordinate FMN. 243 to 244 is a substrate binding site; it reads NT. FMN-binding positions include Gly262, Gly291, and 312 to 313; that span reads YS.

Belongs to the dihydroorotate dehydrogenase family. Type 2 subfamily. As to quaternary structure, monomer. It depends on FMN as a cofactor.

Its subcellular location is the cell membrane. The catalysed reaction is (S)-dihydroorotate + a quinone = orotate + a quinol. The protein operates within pyrimidine metabolism; UMP biosynthesis via de novo pathway; orotate from (S)-dihydroorotate (quinone route): step 1/1. Functionally, catalyzes the conversion of dihydroorotate to orotate with quinone as electron acceptor. The sequence is that of Dihydroorotate dehydrogenase (quinone) from Helicobacter pylori (strain Shi470).